We begin with the raw amino-acid sequence, 694 residues long: DNA primase (694 aa).

A CHC2-type zinc finger spans residues 41-65 (CPFHDDKSPSFTVSPAKQFYYCFSC). The 84-residue stretch at 265–348 (DQAVVVEGYF…QGQVQLRVLN (84 aa)) folds into the Toprim domain. Residues E271, D317, and D319 each contribute to the Mg(2+) site.

This sequence belongs to the DnaG primase family. In terms of assembly, monomer. Interacts with DnaB. Requires Zn(2+) as cofactor. Mg(2+) is required as a cofactor.

The enzyme catalyses ssDNA + n NTP = ssDNA/pppN(pN)n-1 hybrid + (n-1) diphosphate.. Functionally, RNA polymerase that catalyzes the synthesis of short RNA molecules used as primers for DNA polymerase during DNA replication. The protein is DNA primase of Synechococcus elongatus (strain ATCC 33912 / PCC 7942 / FACHB-805) (Anacystis nidulans R2).